Reading from the N-terminus, the 59-residue chain is Crassipeptide cce9a (59 aa).

A propeptide spanning residues 1–30 (ADNHARVAGPRAVASGRYATEKAFLQMMTR) is cleaved from the precursor.

Contains 3 disulfide bonds. Expressed by the venom duct.

The protein resides in the secreted. Crassispirid snail peptide that induces sleep-like symptoms in young mice (12 and 14 days) and hyperactivity in older mice (16 days), when intracranially injected. The chain is Crassipeptide cce9a from Crassispira cerithina (Sea snail).